A 917-amino-acid polypeptide reads, in one-letter code: Translation initiation factor IF-2 (917 aa).

The segment at 1–312 (MEEQKSIKET…KGGREENENT (312 aa)) is disordered. Positions 20-30 (TKKKLVIKKKA) are enriched in basic residues. The span at 41–59 (PGAQGQTTATEAKQSSPAS) shows a compositional bias: polar residues. Composition is skewed to basic and acidic residues over residues 60–76 (SDKK…EAKR) and 95–118 (RPDR…RKPE). 3 stretches are compositionally biased toward gly residues: residues 132–141 (SGGGQGGGNQ), 167–256 (QTGG…GYQG), and 281–293 (APGG…GPGG). Over residues 297–312 (RVFDKEKGGREENENT) the composition is skewed to basic and acidic residues. Residues 414–587 (TRPPVVTIMG…ELLDHKANPK (174 aa)) enclose the tr-type G domain. The segment at 423-430 (GHVDHGKT) is G1. 423 to 430 (GHVDHGKT) is a GTP binding site. The segment at 448–452 (GITQH) is G2. The segment at 469–472 (DTPG) is G3. GTP is bound by residues 469-473 (DTPGH) and 523-526 (NKID). The segment at 523 to 526 (NKID) is G4. Positions 559-561 (SAK) are G5.

The protein belongs to the TRAFAC class translation factor GTPase superfamily. Classic translation factor GTPase family. IF-2 subfamily.

The protein resides in the cytoplasm. Functionally, one of the essential components for the initiation of protein synthesis. Protects formylmethionyl-tRNA from spontaneous hydrolysis and promotes its binding to the 30S ribosomal subunits. Also involved in the hydrolysis of GTP during the formation of the 70S ribosomal complex. The protein is Translation initiation factor IF-2 of Leptospira biflexa serovar Patoc (strain Patoc 1 / ATCC 23582 / Paris).